The chain runs to 343 residues: Heat-inducible transcription repressor HrcA (343 aa).

This sequence belongs to the HrcA family.

In terms of biological role, negative regulator of class I heat shock genes (grpE-dnaK-dnaJ and groELS operons). Prevents heat-shock induction of these operons. The polypeptide is Heat-inducible transcription repressor HrcA (Clostridium acetobutylicum (strain ATCC 824 / DSM 792 / JCM 1419 / IAM 19013 / LMG 5710 / NBRC 13948 / NRRL B-527 / VKM B-1787 / 2291 / W)).